The primary structure comprises 176 residues: Glycine-rich RNA-binding protein 7 (176 aa).

Alanine 2 is modified (N-acetylalanine). The tract at residues 2–41 (ASGDVEYRCFVGGLAWATDDRALETAFAQYGDVIDSKIIN) is required for RNA chaperone activity. The RRM domain occupies 8–86 (YRCFVGGLAW…RSITVNEAQS (79 aa)). Arginine 49 bears the ADP-ribosylarginine; by HopU1 mark. Residues 83–103 (EAQSRGSGGGGGHRGGGGGGY) form a disordered region. A compositionally biased stretch (gly residues) spans 88-103 (GSGGGGGHRGGGGGGY). Residues 88-175 (GSGGGGGHRG…GYGGSGGGGG (88 aa)) form a glycine-rich (GR) required for cell-to-cell movement region. The interval 97-148 (GGGGGGYRSGGGGGYSGGGGSYGGGGGRREGGGGYSGGGGGYSSRGGGGGSY) is nuclear targeting sequence (M9). Phosphoserine is present on residues serine 105 and serine 117. The tract at residues 131–176 (YSGGGGGYSSRGGGGGSYGGGRREGGGGYGGGEGGGYGGSGGGGGW) is disordered.

The protein belongs to the GR-RBP family. As to quaternary structure, interacts with TRN1. Interacts with the Pseudomonas syringae type III effector HopU1. Binds to small phloem-mobile single-stranded RNAs (ss-sRNA, e.g. small interfering RNA (siRNA) and microRNA (miRNA)) in the phloeme exudate, including viral-derived sRNA (vsiRNA). In terms of processing, ADP-ribosylated by the Pseudomonas syringae type III effector HopU1. ADP-ribosylation reduces the ability of the protein to bind RNA. In terms of tissue distribution, ubiquitous with strong expression in guard cell.

It is found in the cytoplasm. The protein resides in the nucleus. Its subcellular location is the secreted. Its function is as follows. Plays a role in RNA transcription or processing during stress. Binds RNAs and DNAs sequence with a preference to single-stranded nucleic acids. Displays strong affinity to poly(U) and poly(G) sequence. Involved in mRNA alternative splicing of numerous targets by modulating splice site selection. Negatively regulates the circadian oscillations of its own transcript as well as RBG8 transcript. Forms an interlocked post-transcriptional negative feedback loop with the RBG8 autoregulatory circuit. Both proteins negatively autoregulate and reciprocally crossregulate by binding to their pre-mRNAs and promoting unproductive splicing coupled to degradation via the NMD pathway. Involved in the regulation of abscisic acid and stress responses. Affects the growth and stress tolerance under high salt and dehydration stress conditions, and also confers freezing tolerance, particularly via the regulation of stomatal opening and closing in the guard cells. Exhibits RNA chaperone activity during the cold adaptation process. Involved in the export of mRNAs from the nucleus to the cytoplasm under cold stress conditions. Target of the Pseudomonas syringae type III effector HopU1, which could probably be involved in plant innate immunity. Component of the flowering autonomous pathway which promotes floral transition, at least partly by down-regulating FLC. Mediates cell-to-cell trafficking of RNA interference (RNAi) signals (small RNAs (sRNA), e.g. small interfering RNA (siRNA) and microRNA (miRNA)) which regulate growth and development, as well as responses to environmental inputs, including pathogen attack; can compromise zucchini yellow mosaic virus (ZYMV) and tobacco rattle virus (TRV) infections at the early stage. The protein is Glycine-rich RNA-binding protein 7 of Arabidopsis thaliana (Mouse-ear cress).